We begin with the raw amino-acid sequence, 342 residues long: Galactose mutarotase (342 aa).

Ser-14 bears the Phosphoserine mark. Residues Asn-81–Arg-82 and His-107 contribute to the beta-D-galactose site. Position 124 is a phosphoserine (Ser-124). His-176 functions as the Proton donor in the catalytic mechanism. Residues His-176–Tyr-178, Asp-243, Gln-279, and Glu-307 each bind beta-D-galactose. Catalysis depends on Glu-307, which acts as the Proton acceptor.

Belongs to the aldose epimerase family. Monomer.

The protein resides in the cytoplasm. The catalysed reaction is alpha-D-galactose = beta-D-galactose. It catalyses the reaction alpha-D-glucose = beta-D-glucose. Its pathway is carbohydrate metabolism; hexose metabolism. The protein operates within carbohydrate metabolism; galactose metabolism. In terms of biological role, mutarotase that catalyzes the interconversion of beta-D-galactose and alpha-D-galactose during galactose metabolism. Beta-D-galactose is metabolized in the liver into glucose 1-phosphate, the primary metabolic fuel, by the action of four enzymes that constitute the Leloir pathway: GALM, GALK1 (galactokinase), GALT (galactose-1-phosphate uridylyltransferase) and GALE (UDP-galactose-4'-epimerase). Involved in the maintenance of the equilibrium between the beta- and alpha-anomers of galactose, therefore ensuring a sufficient supply of the alpha-anomer for GALK1. Also active on D-glucose although shows a preference for galactose over glucose. The protein is Galactose mutarotase (GALM) of Sus scrofa (Pig).